Here is a 101-residue protein sequence, read N- to C-terminus: Small ribosomal subunit protein uS17 (101 aa).

It belongs to the universal ribosomal protein uS17 family. In terms of assembly, part of the 30S ribosomal subunit.

In terms of biological role, one of the primary rRNA binding proteins, it binds specifically to the 5'-end of 16S ribosomal RNA. This chain is Small ribosomal subunit protein uS17, found in Leifsonia xyli subsp. xyli (strain CTCB07).